The sequence spans 974 residues: MSKETRDAAAEGRPSYKDTLNLLQTGFGMRANAVKREPELQAFWSDNGIDGQLGLQNDGPTFTLHDGPPYANGALHMGHALNKVLKDVINKYQVLKGRRVRYVPGWDCHGLPIELKVLQSMDQEQRKALTPIKLRKKAAAYARKQVDGQMKGFQRWGIWADWEQPYLTLQKEYEAAQIKVFGEMVLKGHIYRGLKPVHWSPSSRTALAEAELEYPDGHTSPSVYVAFPAMEVPTPLRDALKAEGLELPTETDALRQALQVAIWTTTPWTLPANLAVSVNERLDYALVDDGSGRMLVVAADLIESLSTTLERPLKHRATVKGALLAGLIYRHPLLDRTSPVVIGGEYITTESGTGLVHTAPGHGVDDFHTGQKHGLPVLCPVDEAGTLTAEAGPFAGLNVLKDANPGIIEALEQAGALLKQEAYSHRYPYDWRTKKPTIFRATEQWFASVEGFRQDALDAIDQVQWTPASGRNRIEAMVKERGDWCISRQRTWGVPIPVFYHHSNGEVLLNADTLSHIETLIASHGADVWWEKDETDLLPPAYANQADQWRKGTDTMDVWFDSGSSWAAVSSQRESLSYPADLYLEGSDQHRGWFQSSLLTSVAVNGHAPYKRVLTHGFALDEKGRKMSKSLGNVVDPMVIIEGGKNQKQEPPYGADVLRLWVSSVDYSADVPIGAGILRQLADVYRKVRNTSRYLLGNLHDFNPASDAIAVADLPLLDRWMLQRTAEVMHEITEAFESYEFFRFFQLLQNFCVTDLSNFYLDIAKDRLYVSAPTDQRRRSCQTVMALIIERLAGFIAPVLCHMAEDIWQNLPYPVQETSVFQRGWPTIPSDWRNDTLSAPVQQLRDLRAAVNKVLEDCRGRQELGASLEAAVRIDARSPELQAALSWLNDNGDPDVDGLRDWLLVSQLQLGGEPWAEVLSNHEDELALIEVSRARGTKCERCWHYEGDVGQHPDHAHICGRCVGVLERRTHQLV.

The 'HIGH' region signature appears at 69-79 (PYANGALHMGH). Position 585 (glutamate 585) interacts with L-isoleucyl-5'-AMP. The 'KMSKS' region motif lies at 626 to 630 (KMSKS). Lysine 629 lines the ATP pocket. Positions 939, 942, 959, and 962 each coordinate Zn(2+).

This sequence belongs to the class-I aminoacyl-tRNA synthetase family. IleS type 1 subfamily. In terms of assembly, monomer. Requires Zn(2+) as cofactor.

It localises to the cytoplasm. The catalysed reaction is tRNA(Ile) + L-isoleucine + ATP = L-isoleucyl-tRNA(Ile) + AMP + diphosphate. In terms of biological role, catalyzes the attachment of isoleucine to tRNA(Ile). As IleRS can inadvertently accommodate and process structurally similar amino acids such as valine, to avoid such errors it has two additional distinct tRNA(Ile)-dependent editing activities. One activity is designated as 'pretransfer' editing and involves the hydrolysis of activated Val-AMP. The other activity is designated 'posttransfer' editing and involves deacylation of mischarged Val-tRNA(Ile). In Parasynechococcus marenigrum (strain WH8102), this protein is Isoleucine--tRNA ligase.